The chain runs to 284 residues: Phospholipid phosphatase 1 (284 aa).

Over 1-6 (MFDKTR) the chain is Cytoplasmic. Positions 5 to 7 (TRL) match the PDZ-binding; involved in localization to the apical cell membrane motif. The chain crosses the membrane as a helical span at residues 7-27 (LPYVALDVLCVLLAGLPFAIL). Residues 28–53 (TSRHTPFQRGVFCNDESIKYPYKEDT) lie on the Extracellular side of the membrane. The helical transmembrane segment at 54-74 (IPYALLGGIIIPFSIIVIILG) threads the bilayer. Residues 75–94 (ETLSVYCNLLHSNSFIRNNY) are Cytoplasmic-facing. Residues 95–115 (IATIYKAIGTFLFGAAASQSL) traverse the membrane as a helical segment. Residues 116 to 164 (TDIAKYSIGRLRPHFLDVCDPDWSKINCSDGYIEYYICRGNAERVKEGR) lie on the Extracellular side of the membrane. The interval 120–128 (KYSIGRLRP) is phosphatase sequence motif I. Asn-142 carries N-linked (GlcNAc...) asparagine glycosylation. A helical membrane pass occupies residues 165 to 185 (LSFYSGHSSFSMYCMLFVALY). Residues 168–171 (YSGH) form a phosphatase sequence motif II region. His-171 (proton donors) is an active-site residue. The Cytoplasmic portion of the chain corresponds to 186–199 (LQARMKGDWARLLR). Residues 200-220 (PTLQFGLVAVSIYVGLSRVSD) traverse the membrane as a helical segment. Residues 216-227 (SRVSDYKHHWSD) are phosphatase sequence motif III. Residues 221–229 (YKHHWSDVL) are Extracellular-facing. His-223 functions as the Nucleophile in the catalytic mechanism. Residues 230–250 (TGLIQGALVAILVAVYVSDFF) traverse the membrane as a helical segment. The Cytoplasmic portion of the chain corresponds to 251-284 (KERTSFKERKEEDSHTTLHETPTTGNHYPSNHQP). Residues 260–284 (KEEDSHTTLHETPTTGNHYPSNHQP) are disordered. Residues 269–284 (HETPTTGNHYPSNHQP) are compositionally biased toward polar residues.

Belongs to the PA-phosphatase related phosphoesterase family. Forms functional homodimers and homooligomers that are not required for substrate recognition and catalytic activity. Can also form heterooligomers with PLPP2 and PLPP3. N-glycosylated. N-linked sugars are of the complex type. N-glycosylation is not required for the phosphatase activity. In terms of tissue distribution, widely expressed with highest expression found in prostate. Found to be down-regulated in colon adenocarcinomas. As to expression, predominant in kidney, lung, placenta and liver. Predominant in heart and pancreas.

The protein localises to the cell membrane. Its subcellular location is the apical cell membrane. The protein resides in the membrane raft. It is found in the membrane. It localises to the caveola. It catalyses the reaction a 1,2-diacyl-sn-glycero-3-phosphate + H2O = a 1,2-diacyl-sn-glycerol + phosphate. The enzyme catalyses 1,2-dihexadecanoyl-sn-glycero-3-phosphate + H2O = 1,2-dihexadecanoyl-sn-glycerol + phosphate. The catalysed reaction is 1,2-di-(9Z-octadecenoyl)-sn-glycero-3-phosphate + H2O = 1,2-di-(9Z-octadecenoyl)-sn-glycerol + phosphate. It carries out the reaction a monoacyl-sn-glycero-3-phosphate + H2O = a monoacylglycerol + phosphate. It catalyses the reaction (9Z)-octadecenoyl-sn-glycero-3-phosphate + H2O = (9Z-octadecenoyl)-glycerol + phosphate. The enzyme catalyses a 1-acyl-sn-glycero-3-phosphate + H2O = a 1-acyl-sn-glycerol + phosphate. The catalysed reaction is 1-(9Z-octadecenoyl)-sn-glycero-3-phosphate + H2O = 1-(9Z-octadecenoyl)-sn-glycerol + phosphate. It carries out the reaction a 1,2-diacyl-sn-glycerol 3-diphosphate + H2O = a 1,2-diacyl-sn-glycero-3-phosphate + phosphate + H(+). It catalyses the reaction sphing-4-enine 1-phosphate + H2O = sphing-4-enine + phosphate. The enzyme catalyses an N-acylsphing-4-enine 1-phosphate + H2O = an N-acylsphing-4-enine + phosphate. The catalysed reaction is N-(octanoyl)-sphing-4-enine-1-phosphate + H2O = N-octanoylsphing-4-enine + phosphate. It carries out the reaction N-(9Z-octadecenoyl)-ethanolamine phosphate + H2O = N-(9Z-octadecenoyl) ethanolamine + phosphate. It catalyses the reaction 1-hexadecanoyl-2-(9Z-octadecenoyl)-sn-glycero-3-phosphate + H2O = 1-hexadecanoyl-2-(9Z-octadecenoyl)-sn-glycerol + phosphate. It functions in the pathway lipid metabolism; phospholipid metabolism. Its activity is regulated as follows. Magnesium-independent phospholipid phosphatase. Insensitive to N-ethylmaleimide. Inhibited by sphingosine, zinc ions and modestly by propanolol. Inhibited by vanadate. Functionally, magnesium-independent phospholipid phosphatase of the plasma membrane that catalyzes the dephosphorylation of a variety of glycerolipid and sphingolipid phosphate esters including phosphatidate/PA, lysophosphatidate/LPA, diacylglycerol pyrophosphate/DGPP, sphingosine 1-phosphate/S1P and ceramide 1-phosphate/C1P. Also acts on N-oleoyl ethanolamine phosphate/N-(9Z-octadecenoyl)-ethanolamine phosphate, a potential physiological compound. Through its extracellular phosphatase activity allows both the hydrolysis and the cellular uptake of these bioactive lipid mediators from the milieu, regulating signal transduction in different cellular processes. It is for instance essential for the extracellular hydrolysis of S1P and subsequent conversion into intracellular S1P. Involved in the regulation of inflammation, platelets activation, cell proliferation and migration among other processes. May also have an intracellular activity to regulate phospholipid-mediated signaling pathways. This Homo sapiens (Human) protein is Phospholipid phosphatase 1.